Here is a 162-residue protein sequence, read N- to C-terminus: NADH-quinone oxidoreductase subunit I (162 aa).

4Fe-4S ferredoxin-type domains follow at residues 53–83 (LRRY…IDSA) and 93–122 (TRYD…ETHI). Positions 63, 66, 69, 73, 102, 105, 108, and 112 each coordinate [4Fe-4S] cluster.

This sequence belongs to the complex I 23 kDa subunit family. NDH-1 is composed of 14 different subunits. Subunits NuoA, H, J, K, L, M, N constitute the membrane sector of the complex. [4Fe-4S] cluster serves as cofactor.

The protein resides in the cell inner membrane. The catalysed reaction is a quinone + NADH + 5 H(+)(in) = a quinol + NAD(+) + 4 H(+)(out). Its function is as follows. NDH-1 shuttles electrons from NADH, via FMN and iron-sulfur (Fe-S) centers, to quinones in the respiratory chain. The immediate electron acceptor for the enzyme in this species is believed to be ubiquinone. Couples the redox reaction to proton translocation (for every two electrons transferred, four hydrogen ions are translocated across the cytoplasmic membrane), and thus conserves the redox energy in a proton gradient. This chain is NADH-quinone oxidoreductase subunit I, found in Xanthomonas axonopodis pv. citri (strain 306).